The chain runs to 97 residues: NADH-ubiquinone oxidoreductase chain 4L (97 aa).

3 helical membrane-spanning segments follow: residues 1-21, 28-48, and 57-77; these read MSMFGLFTCLSIYFSGVYVFC, LVVLLSLEYIVLSLFMLIVLF, and FFPVIFLVFSVCEGALGLSIL.

This sequence belongs to the complex I subunit 4L family.

The protein resides in the mitochondrion membrane. It catalyses the reaction a ubiquinone + NADH + 5 H(+)(in) = a ubiquinol + NAD(+) + 4 H(+)(out). Its function is as follows. Core subunit of the mitochondrial membrane respiratory chain NADH dehydrogenase (Complex I) that is believed to belong to the minimal assembly required for catalysis. Complex I functions in the transfer of electrons from NADH to the respiratory chain. The immediate electron acceptor for the enzyme is believed to be ubiquinone. The protein is NADH-ubiquinone oxidoreductase chain 4L (ND4L) of Locusta migratoria (Migratory locust).